The chain runs to 134 residues: UPF0102 protein Dshi_2830 (134 aa).

The protein belongs to the UPF0102 family.

The chain is UPF0102 protein Dshi_2830 from Dinoroseobacter shibae (strain DSM 16493 / NCIMB 14021 / DFL 12).